The chain runs to 141 residues: Nucleoside diphosphate kinase (141 aa).

K11, F59, R87, T93, R104, and N114 together coordinate ATP. H117 serves as the catalytic Pros-phosphohistidine intermediate.

The protein belongs to the NDK family. As to quaternary structure, homotetramer. The cofactor is Mg(2+).

It is found in the cytoplasm. The catalysed reaction is a 2'-deoxyribonucleoside 5'-diphosphate + ATP = a 2'-deoxyribonucleoside 5'-triphosphate + ADP. It catalyses the reaction a ribonucleoside 5'-diphosphate + ATP = a ribonucleoside 5'-triphosphate + ADP. Its function is as follows. Major role in the synthesis of nucleoside triphosphates other than ATP. The ATP gamma phosphate is transferred to the NDP beta phosphate via a ping-pong mechanism, using a phosphorylated active-site intermediate. This chain is Nucleoside diphosphate kinase, found in Nitrosomonas europaea (strain ATCC 19718 / CIP 103999 / KCTC 2705 / NBRC 14298).